Here is a 275-residue protein sequence, read N- to C-terminus: Tryptophan synthase alpha chain (275 aa).

Residues Glu51 and Asp62 each act as proton acceptor in the active site.

Belongs to the TrpA family. As to quaternary structure, tetramer of two alpha and two beta chains.

It carries out the reaction (1S,2R)-1-C-(indol-3-yl)glycerol 3-phosphate + L-serine = D-glyceraldehyde 3-phosphate + L-tryptophan + H2O. It functions in the pathway amino-acid biosynthesis; L-tryptophan biosynthesis; L-tryptophan from chorismate: step 5/5. Its function is as follows. The alpha subunit is responsible for the aldol cleavage of indoleglycerol phosphate to indole and glyceraldehyde 3-phosphate. The sequence is that of Tryptophan synthase alpha chain from Methanopyrus kandleri (strain AV19 / DSM 6324 / JCM 9639 / NBRC 100938).